Consider the following 222-residue polypeptide: DNA ADP-ribosyl transferase (222 aa).

The DarT domain maps to 12 to 209 (TLIYHITHLN…PVRVRRSWYY (198 aa)). NAD(+)-binding positions include 16 to 18 (HIT), Gly25, and Leu33. The segment at 38-56 (RPPTQQNVAYGHIQAHRAQ) is NAD(+)-binding element. A DNA-binding region spans residues 47 to 53 (YGHIQAH). Arg54 contacts NAD(+). The Proton acceptor role is filled by Arg54. 3 consecutive DNA-binding regions follow at residues 78 to 83 (RSPMLY), 148 to 151 (SYWA), and 154 to 158 (REKKQ). Residues 119–160 (TDRHAAVQYVCFFHKLEHLKALDWQAIQASYWANVREKKQAE) form an ADP-ribosylating turn-turn loop region. Glu160 is a catalytic residue.

This sequence belongs to the DarT ADP-ribosyltransferase family. As to quaternary structure, interacts with cognate antitoxin DarG (via C-terminus); this heterodimeric complex neutralizes the toxic effect of DarT by preventing ssDNA binding to DarT and consequently inactivating the toxin by direct protein-protein interactions.

The catalysed reaction is a thymidine in DNA + NAD(+) = an N-(ADP-alpha-D-ribosyl)-thymidine in DNA + nicotinamide + H(+). In terms of biological role, toxic component of the hybrid type II/IV toxin-antitoxin (TA) system DarTG, which plays a crucial role in controlling bacterial growth and bacteriophage infection. Its toxic effect is neutralized by cognate antitoxin DarG. In case of phage infection, DarT toxin ADP-ribosylates DNA, which inhibits both viral DNA and RNA synthesis and leads to abortive infection. ADP-ribosylates ssDNA on the second thymidine of the consensus sequence 5'-TNTC-3'; the protein does not auto-modify. Has no activity on dsDNA in vitro. This leads to a decrease in DNA replication. Upon expression in E.coli inhibits cell growth, colony formation and induces the SOS response. Expression leads to bacteriostasis; however if cells grow over an hour in the presence of toxin, growth is no longer restored on antitoxin-inducing plates. In E.coli ADP-ribosylates genomic DNA (gDNA), which induces RecA expression (a marker for DNA damage). This is DNA ADP-ribosyl transferase from Thermus aquaticus (strain ATCC BAA-2747 / Y51MC23).